Consider the following 813-residue polypeptide: G-type lectin S-receptor-like serine/threonine-protein kinase LECRK1 (813 aa).

Residues 1–19 form the signal peptide; sequence MVALLLFPMLLQLLSPTCA. Residues 20-466 lie on the Extracellular side of the membrane; it reads QTQKNITLGS…NRKHWVLGSS (447 aa). Residues 22 to 149 form the Bulb-type lectin domain; it reads QKNITLGSTL…DGTTKWQTFD (128 aa). N24, N57, N164, N168, N219, and N242 each carry an N-linked (GlcNAc...) asparagine glycan. The EGF-like; atypical domain maps to 293–346; sequence PQNICHAIVSDVGSGVCGFNSYCTFDGTRNQIASCQCPPWYKFFDEQKKYKGCK. 5 cysteine pairs are disulfide-bonded: C297/C315, C309/C327, C329/C345, C391/C413, and C395/C401. The PAN domain occupies 354 to 433; sequence CDLEEATALA…NMADYVQRTV (80 aa). 2 N-linked (GlcNAc...) asparagine glycosylation sites follow: N407 and N441. The chain crosses the membrane as a helical span at residues 467-487; sequence LILGTSILVNFALISIFLFGT. Residues 488–813 lie on the Cytoplasmic side of the membrane; sequence YCRITTKKNI…DPCSFISSLP (326 aa). The Protein kinase domain maps to 523–797; sequence AGFHEILGAG…KVTQMLDGAV (275 aa). Residues 529–537 and K553 each bind ATP; that span reads LGAGASGVV. The Proton acceptor role is filled by D647.

This sequence belongs to the protein kinase superfamily. Ser/Thr protein kinase family. In terms of assembly, interacts (via kinase domain) with ADF4. As to expression, expressed in plumules, radicles and panicles.

It localises to the membrane. The catalysed reaction is L-seryl-[protein] + ATP = O-phospho-L-seryl-[protein] + ADP + H(+). It carries out the reaction L-threonyl-[protein] + ATP = O-phospho-L-threonyl-[protein] + ADP + H(+). In terms of biological role, involved in innate immunity. Required for the expression of defense-related genes PR1A, LOX2 and CHS1 upon biotic stresses. Required for basal resistance to the fungal blast (M.grisea), bacterial blight (O.oryzae pv. oryzae, Xoo) and the herbivorous insect brown planthopper (N.lugens, BPH). May be involved in several defense signaling pathways. Involved in the promotion of seed germination. Required for the expression of alpha-amylase genes during seed germination. Involved in resistance against the brown planthopper (BPH). Member of the BPH3 (BPH resistance locus 3) cluster which contains LECRK1, LECRK2 and LECRK3. This Oryza sativa subsp. indica (Rice) protein is G-type lectin S-receptor-like serine/threonine-protein kinase LECRK1.